We begin with the raw amino-acid sequence, 347 residues long: MSNYNNKHHDDGNPFYNEPINTSPTQQQQQQQQNLFPNTNIDYNDYTQNRGQQQQQQPAYQPDLQFQSFSHDVDVNSNTSPNNNNNNNSNNNNSNKIGGNSSNNKFSDNVPLNTNEDGTEKKYSFYEVPYYRFLFNVDTKEVGLRLIRSMLPIKFSFFNLIRENPDLYGPFWVLTSLVFIVAVTSNLNEYFHSSDHKSWEVDIQKIVYSAITIYGYSFVIPLILWGIFKWMNLGLRLLDMLCIYGYTLFIFVPASILCVIPLQLVQWIIVAIASIVSGLFLVTNIFTPLKEDFTKRGLIICAVIGALHIGLALVLKLYFFANSTENFTISDSSSTPTPTPTNTTKLL.

Residues 1-115 form a disordered region; the sequence is MSNYNNKHHD…FSDNVPLNTN (115 aa). The Cytoplasmic segment spans residues 1 to 166; sequence MSNYNNKHHD…FFNLIRENPD (166 aa). Over residues 34–47 the composition is skewed to polar residues; the sequence is NLFPNTNIDYNDYT. Composition is skewed to low complexity over residues 48 to 67 and 76 to 104; these read QNRG…LQFQ and NSNT…SSNN. A compositionally biased stretch (polar residues) spans 105 to 115; the sequence is KFSDNVPLNTN. The helical transmembrane segment at 167–187 threads the bilayer; that stretch reads LYGPFWVLTSLVFIVAVTSNL. Topologically, residues 188-207 are lumenal; that stretch reads NEYFHSSDHKSWEVDIQKIV. A helical membrane pass occupies residues 208-228; the sequence is YSAITIYGYSFVIPLILWGIF. The Cytoplasmic segment spans residues 229–232; that stretch reads KWMN. The chain crosses the membrane as a helical span at residues 233 to 253; sequence LGLRLLDMLCIYGYTLFIFVP. Residues 254–255 lie on the Lumenal side of the membrane; sequence AS. The helical transmembrane segment at 256–276 threads the bilayer; sequence ILCVIPLQLVQWIIVAIASIV. Over 277 to 296 the chain is Cytoplasmic; that stretch reads SGLFLVTNIFTPLKEDFTKR. A helical transmembrane segment spans residues 297–317; it reads GLIICAVIGALHIGLALVLKL. Topologically, residues 318-347 are lumenal; the sequence is YFFANSTENFTISDSSSTPTPTPTNTTKLL. Residues asparagine 322, asparagine 326, and asparagine 342 are each glycosylated (N-linked (GlcNAc...) asparagine).

The protein belongs to the YIP1 family.

The protein resides in the golgi apparatus. The protein localises to the cis-Golgi network membrane. It localises to the trans-Golgi network membrane. Its subcellular location is the late endosome membrane. In Dictyostelium discoideum (Social amoeba), this protein is Protein YIPF1 homolog (yipf1).